Here is a 168-residue protein sequence, read N- to C-terminus: MIEIRTGIGTDVHQLSAGVPMHVAGLSFPDETVGLVGHSDGDVACHAICDALLSATGLGDIGSIFGTADPQWAGAAGVALLGHVVALVTGEGWTIQNVAVQVVGQRPRMAARRAEAEAALAQTVGAPVSVSATTTDHLGFTGRGEGVAAIASALVTRGLKGEDSSLIR.

Asp11 and His13 together coordinate a divalent metal cation. 4-CDP-2-C-methyl-D-erythritol 2-phosphate-binding positions include 11-13 and 38-39; these read DVH and HS. His46 serves as a coordination point for a divalent metal cation. 4-CDP-2-C-methyl-D-erythritol 2-phosphate contacts are provided by residues 60–62, 133–136, Phe140, and Arg143; these read DIG and TTTD.

It belongs to the IspF family. In terms of assembly, homotrimer. The cofactor is a divalent metal cation.

It catalyses the reaction 4-CDP-2-C-methyl-D-erythritol 2-phosphate = 2-C-methyl-D-erythritol 2,4-cyclic diphosphate + CMP. The protein operates within isoprenoid biosynthesis; isopentenyl diphosphate biosynthesis via DXP pathway; isopentenyl diphosphate from 1-deoxy-D-xylulose 5-phosphate: step 4/6. Functionally, involved in the biosynthesis of isopentenyl diphosphate (IPP) and dimethylallyl diphosphate (DMAPP), two major building blocks of isoprenoid compounds. Catalyzes the conversion of 4-diphosphocytidyl-2-C-methyl-D-erythritol 2-phosphate (CDP-ME2P) to 2-C-methyl-D-erythritol 2,4-cyclodiphosphate (ME-CPP) with a corresponding release of cytidine 5-monophosphate (CMP). The polypeptide is 2-C-methyl-D-erythritol 2,4-cyclodiphosphate synthase (Cutibacterium acnes (strain DSM 16379 / KPA171202) (Propionibacterium acnes)).